Consider the following 351-residue polypeptide: Cell shape-determining protein MreB (351 aa).

ATP-binding positions include 20 to 22, 169 to 171, 217 to 220, and 299 to 302; these read TAN, GGT, ERIK, and GGAL.

The protein belongs to the FtsA/MreB family. As to quaternary structure, forms polymers.

The protein localises to the cytoplasm. In terms of biological role, forms membrane-associated dynamic filaments that are essential for cell shape determination. Acts by regulating cell wall synthesis and cell elongation, and thus cell shape. A feedback loop between cell geometry and MreB localization may maintain elongated cell shape by targeting cell wall growth to regions of negative cell wall curvature. The sequence is that of Cell shape-determining protein MreB from Pasteurella multocida (strain Pm70).